A 367-amino-acid polypeptide reads, in one-letter code: Heme A synthase (367 aa).

A run of 5 helical transmembrane segments spans residues isoleucine 26–alanine 46, leucine 111–glycine 131, leucine 139–valine 159, leucine 174–glycine 194, and alanine 212–leucine 232. Histidine 274 lines the heme pocket. Helical transmembrane passes span alanine 276 to alanine 296, serine 305 to leucine 325, and valine 327 to isoleucine 347. Histidine 335 is a heme binding site.

Belongs to the COX15/CtaA family. Type 2 subfamily. Interacts with CtaB. It depends on heme b as a cofactor.

The protein localises to the cell membrane. The enzyme catalyses Fe(II)-heme o + 2 A + H2O = Fe(II)-heme a + 2 AH2. The protein operates within porphyrin-containing compound metabolism; heme A biosynthesis; heme A from heme O: step 1/1. In terms of biological role, catalyzes the conversion of heme O to heme A by two successive hydroxylations of the methyl group at C8. The first hydroxylation forms heme I, the second hydroxylation results in an unstable dihydroxymethyl group, which spontaneously dehydrates, resulting in the formyl group of heme A. The polypeptide is Heme A synthase (Sinorhizobium fredii (strain NBRC 101917 / NGR234)).